We begin with the raw amino-acid sequence, 625 residues long: Alpha-amylase 1 (625 aa).

Residues 1 to 22 (MGFSKIALFSLFALFGLPTSLA) form the signal peptide. A disulfide bridge connects residues C51 and C59. W105 is a substrate binding site. N143 serves as a coordination point for Ca(2+). 3 N-linked (GlcNAc...) asparagine glycosylation sites follow: N153, N163, and N180. Cysteines 172 and 187 form a disulfide. 2 residues coordinate Ca(2+): E185 and D198. R227 lines the substrate pocket. D229 provides a ligand contact to Ca(2+). Catalysis depends on D229, which acts as the Nucleophile. 232–233 (KQ) provides a ligand contact to substrate. N-linked (GlcNAc...) asparagine glycosylation is present at N241. Residue E253 coordinates Ca(2+). E253 (proton donor) is an active-site residue. 2 N-linked (GlcNAc...) asparagine glycosylation sites follow: N260 and N286. Residues C263 and C306 are joined by a disulfide bond. Substrate is bound at residue D322. An N-linked (GlcNAc...) asparagine glycan is attached at N331. Position 370 (R370) interacts with substrate. N440 and N461 each carry an N-linked (GlcNAc...) asparagine glycan. The segment at 526 to 579 (SATSSSKSSSSSSSRSGSSSSSSSRSGSTSSSGSSHTITSTSQSVHTSGSSTST) is disordered. The GPI-anchor amidated serine moiety is linked to residue S603. Positions 604–625 (SANAVRVSILGVAAFIAIVLFI) are cleaved as a propeptide — removed in mature form.

It belongs to the glycosyl hydrolase 13 family. It depends on Ca(2+) as a cofactor.

The protein localises to the cell membrane. It carries out the reaction Endohydrolysis of (1-&gt;4)-alpha-D-glucosidic linkages in polysaccharides containing three or more (1-&gt;4)-alpha-linked D-glucose units.. This chain is Alpha-amylase 1 (aah1), found in Schizosaccharomyces pombe (strain 972 / ATCC 24843) (Fission yeast).